A 100-amino-acid chain; its full sequence is Large ribosomal subunit protein uL23 (100 aa).

It belongs to the universal ribosomal protein uL23 family. Part of the 50S ribosomal subunit. Contacts protein L29, and trigger factor when it is bound to the ribosome.

In terms of biological role, one of the early assembly proteins it binds 23S rRNA. One of the proteins that surrounds the polypeptide exit tunnel on the outside of the ribosome. Forms the main docking site for trigger factor binding to the ribosome. This chain is Large ribosomal subunit protein uL23, found in Colwellia psychrerythraea (strain 34H / ATCC BAA-681) (Vibrio psychroerythus).